The chain runs to 447 residues: GTPase Der (447 aa).

EngA-type G domains follow at residues 3–167 (PVIA…VQER) and 181–354 (VKIA…AAAM). Residues 9-16 (GRPNVGKS), 56-60 (DTGGF), 119-122 (NKAE), 187-194 (GRPNVGKS), 234-238 (DTAGL), and 299-302 (NKWD) each bind GTP. The KH-like domain maps to 355–439 (VKLPTPQLTR…PLRIEFRTNK (85 aa)).

Belongs to the TRAFAC class TrmE-Era-EngA-EngB-Septin-like GTPase superfamily. EngA (Der) GTPase family. In terms of assembly, associates with the 50S ribosomal subunit.

Functionally, GTPase that plays an essential role in the late steps of ribosome biogenesis. The polypeptide is GTPase Der (Cupriavidus pinatubonensis (strain JMP 134 / LMG 1197) (Cupriavidus necator (strain JMP 134))).